Reading from the N-terminus, the 138-residue chain is ATP synthase epsilon chain (138 aa).

The protein belongs to the ATPase epsilon chain family. F-type ATPases have 2 components, CF(1) - the catalytic core - and CF(0) - the membrane proton channel. CF(1) has five subunits: alpha(3), beta(3), gamma(1), delta(1), epsilon(1). CF(0) has three main subunits: a, b and c.

Its subcellular location is the cell inner membrane. In terms of biological role, produces ATP from ADP in the presence of a proton gradient across the membrane. The chain is ATP synthase epsilon chain from Geotalea daltonii (strain DSM 22248 / JCM 15807 / FRC-32) (Geobacter daltonii).